Here is an 875-residue protein sequence, read N- to C-terminus: Alanine--tRNA ligase (875 aa).

Residues His-564, His-568, Cys-666, and His-670 each coordinate Zn(2+).

The protein belongs to the class-II aminoacyl-tRNA synthetase family. In terms of assembly, homotetramer. It depends on Zn(2+) as a cofactor.

It is found in the cytoplasm. It carries out the reaction tRNA(Ala) + L-alanine + ATP = L-alanyl-tRNA(Ala) + AMP + diphosphate. In terms of biological role, catalyzes the attachment of alanine to tRNA(Ala) in a two-step reaction: alanine is first activated by ATP to form Ala-AMP and then transferred to the acceptor end of tRNA(Ala). Also edits incorrectly charged Ser-tRNA(Ala) and Gly-tRNA(Ala) via its editing domain. The sequence is that of Alanine--tRNA ligase from Serratia proteamaculans (strain 568).